Consider the following 402-residue polypeptide: Multidrug resistance protein MdtH (402 aa).

The next 10 helical transmembrane spans lie at 13 to 33 (YFLL…FPLI), 34 to 54 (SIRF…ALGL), 99 to 116 (PWIL…GTLF), 139 to 159 (LLMM…SWLL), 165 to 185 (YVCW…AWLL), 214 to 234 (VLTL…LPIM), 244 to 264 (AVKW…YPIA), 277 to 297 (LMFG…STTL), 340 to 360 (LGLA…YDMG), and 368 to 388 (LPWA…YWQF).

This sequence belongs to the major facilitator superfamily. DHA1 family. MdtH (TC 2.A.1.2.21) subfamily.

Its subcellular location is the cell inner membrane. The polypeptide is Multidrug resistance protein MdtH (Edwardsiella ictaluri (strain 93-146)).